The sequence spans 425 residues: 3-phosphoshikimate 1-carboxyvinyltransferase (425 aa).

3-phosphoshikimate-binding residues include Lys22, Ser23, and Arg27. Lys22 is a binding site for phosphoenolpyruvate. The phosphoenolpyruvate site is built by Gly95 and Arg123. 7 residues coordinate 3-phosphoshikimate: Ser169, Ser170, Gln171, Ser197, Asp313, Asn336, and Lys340. Gln171 contacts phosphoenolpyruvate. Asp313 acts as the Proton acceptor in catalysis. Residues Arg344, Arg386, and Lys411 each coordinate phosphoenolpyruvate.

It belongs to the EPSP synthase family. As to quaternary structure, monomer.

Its subcellular location is the cytoplasm. The catalysed reaction is 3-phosphoshikimate + phosphoenolpyruvate = 5-O-(1-carboxyvinyl)-3-phosphoshikimate + phosphate. It participates in metabolic intermediate biosynthesis; chorismate biosynthesis; chorismate from D-erythrose 4-phosphate and phosphoenolpyruvate: step 6/7. Functionally, catalyzes the transfer of the enolpyruvyl moiety of phosphoenolpyruvate (PEP) to the 5-hydroxyl of shikimate-3-phosphate (S3P) to produce enolpyruvyl shikimate-3-phosphate and inorganic phosphate. This Marinomonas sp. (strain MWYL1) protein is 3-phosphoshikimate 1-carboxyvinyltransferase.